Consider the following 185-residue polypeptide: MSQIRLTFLKEKNKMKAIKKEFNKKAALLEEKVVKINRITKVVKGGARFRFSALVVVGDKKGQIGFATAKAKEIVEAIKKALEKAKKQLVRIPIVGTTIPHDTIGRFGASKFFLKPASKGTGIVAGGKAARTILELVGINDVLTKTFGSRTSINVIRAVMDGLQSLRTKEEVAKLRGINLAKKEQ.

Residues 29-92 form the S5 DRBM domain; it reads LEEKVVKINR…EKAKKQLVRI (64 aa).

This sequence belongs to the universal ribosomal protein uS5 family. As to quaternary structure, part of the 30S ribosomal subunit. Contacts proteins S4 and S8.

Its function is as follows. With S4 and S12 plays an important role in translational accuracy. Functionally, located at the back of the 30S subunit body where it stabilizes the conformation of the head with respect to the body. This is Small ribosomal subunit protein uS5 from Aster yellows witches'-broom phytoplasma (strain AYWB).